Consider the following 259-residue polypeptide: MELLAKTRKLNALLQSAAGKPVNFREMSDTMCEVIEANVFVVSRRGKLLGYAIHQQIENERMKQMLAERQFPEEYTQNLFNVTETSSNLDVNSEYTAFPVENKDLFGQGLTTIVPIVGGGERLGTLVLARLGREFLDDDLILAEYSATVVGMEILREKAEEIEEEARSKAVVQMAISSLSYSELEAIEHIFEELNGTEGLLVASKIADRVGITRSVIVNALRKLESAGVIESRSLGMKGTYIKVLNDKFLHELAKLKTN.

The interval 1 to 155 (MELLAKTRKL…SATVVGMEIL (155 aa)) is GAF domain. Residues 203 to 222 (ASKIADRVGITRSVIVNALR) constitute a DNA-binding region (H-T-H motif). Position 215 is a phosphoserine (S215).

Belongs to the CodY family.

It is found in the cytoplasm. Its function is as follows. DNA-binding global transcriptional regulator which is involved in the adaptive response to starvation and acts by directly or indirectly controlling the expression of numerous genes in response to nutrient availability. During rapid exponential growth, CodY is highly active and represses genes whose products allow adaptation to nutrient depletion. The protein is Global transcriptional regulator CodY of Bacillus cytotoxicus (strain DSM 22905 / CIP 110041 / 391-98 / NVH 391-98).